The sequence spans 244 residues: Putative nucleosome assembly protein C36B7.08c (244 aa).

The segment at 199–244 (EAMTEEASDEDESVDLEEDEEEEDEEDEEGDEEKQEPPSKKSKKSN) is disordered. The span at 201–232 (MTEEASDEDESVDLEEDEEEEDEEDEEGDEEK) shows a compositional bias: acidic residues. At serine 211 the chain carries Phosphoserine.

It belongs to the nucleosome assembly protein (NAP) family.

The protein resides in the nucleus. This Schizosaccharomyces pombe (strain 972 / ATCC 24843) (Fission yeast) protein is Putative nucleosome assembly protein C36B7.08c.